The sequence spans 777 residues: Hepatocyte growth factor-regulated tyrosine kinase substrate (777 aa).

The region spanning 15–143 is the VHS domain; that stretch reads ATSQLLLETD…IMKVEGHVFP (129 aa). The segment at 160 to 220 adopts an FYVE-type zinc-finger fold; sequence WVDAEECHRC…VCEPCYEQLN (61 aa). Zn(2+) is bound by residues cysteine 166, cysteine 169, cysteine 182, cysteine 185, cysteine 190, and cysteine 193. Position 207 is an N6-acetyllysine (lysine 207). 2 residues coordinate Zn(2+): cysteine 212 and cysteine 215. At tyrosine 216 the chain carries Phosphotyrosine. Residues 223-319 are disordered; sequence AEGKATSTTE…SPVNSSAPLA (97 aa). The segment at 225-543 is interaction with SNX1; sequence GKATSTTELP…QRLQEQEKER (319 aa). One can recognise a UIM domain in the interval 258 to 277; it reads QEEEELQLALALSQSEAEEK. Residues 290–311 are compositionally biased toward low complexity; the sequence is PKAEPMPSASSAPPASSLYSSP. Tyrosine 308, tyrosine 329, and tyrosine 334 each carry phosphotyrosine. The disordered stretch occupies residues 338 to 407; it reads KQEEARKSPT…NGESEESHEQ (70 aa). The interaction with SNAP25 and TRAK2 stretch occupies residues 445–543; sequence SINGMHPQLL…QRLQEQEKER (99 aa). Residues 454–572 form an interaction with STAM region; sequence LELLNQLDER…FPLPYAQLQA (119 aa). An interaction with NF2 region spans residues 480–777; it reads ARGALSALRE…GSEAQLISFD (298 aa). Lysine 551 is modified (N6-succinyllysine). Residues 718-777 are disordered; sequence LPSQDASLPPQQPYIAGQQPMYQQMAPSGGPPQQQPPVAQQPQAQGPPAQGSEAQLISFD. Residues 753–768 are compositionally biased toward low complexity; that stretch reads PPVAQQPQAQGPPAQG.

Component of the ESCRT-0 complex composed of STAM or STAM2 and HGS. Part of a complex at least composed of HSG, STAM2 (or probably STAM) and EPS15. Interacts with STAM. Interacts with STAM2. Interacts with EPS15; the interaction is direct, calcium-dependent and inhibited by SNAP25. Identified in a complex with STAM and LITAF. Found in a complex with STAM and E3 ligase ITCH and DTX3L. Interacts with E3 ligase DTX3L; the interaction brings together STAM and HSG, promotes their recruitment to early endosomes and decreases STAM and HGS ubiquitination by ITCH. Interacts with NF2; the interaction is direct. Interacts with ubiquitin; the interaction is direct. Interacts with VPS37C. Interacts with SMAD1, SMAD2 and SMAD3. Interacts with TSG101; the interaction mediates the association with the ESCRT-I complex. Interacts with SNAP25; the interaction is direct and decreases with addition of increasing concentrations of free calcium. Interacts with SNX1; the interaction is direct. Component of a 550 kDa membrane complex at least composed of HGS and SNX1 but excluding EGFR. Interacts with TRAK1. Interacts with TRAK2. Component of the CART complex, at least composed of ACTN4, HGS/HRS, MYO5B and TRIM3. Interacts (via UIM domain) with UBQLN1 (via ubiquitin-like domain). Interacts with ARRDC3. Identified in a complex containing at least ARRDC4, AVPR2 and HGS. Interacts with LAPTM4B; promotes HGS ubiquitination. Post-translationally, phosphorylated on Tyr-334. A minor site of phosphorylation on Tyr-329 is detected. Phosphorylation occurs in response to EGF, IL-2, GM-CSF and HGF. Ubiquitinated. Ubiquitinated by ITCH. In terms of tissue distribution, ubiquitous expression in adult and fetal tissues with higher expression in testis and peripheral blood leukocytes.

It is found in the cytoplasm. Its subcellular location is the early endosome membrane. It localises to the endosome. The protein resides in the multivesicular body membrane. In terms of biological role, involved in intracellular signal transduction mediated by cytokines and growth factors. When associated with STAM, it suppresses DNA signaling upon stimulation by IL-2 and GM-CSF. Could be a direct effector of PI3-kinase in vesicular pathway via early endosomes and may regulate trafficking to early and late endosomes by recruiting clathrin. May concentrate ubiquitinated receptors within clathrin-coated regions. Involved in down-regulation of receptor tyrosine kinase via multivesicular body (MVBs) when complexed with STAM (ESCRT-0 complex). The ESCRT-0 complex binds ubiquitin and acts as a sorting machinery that recognizes ubiquitinated receptors and transfers them to further sequential lysosomal sorting/trafficking processes. May contribute to the efficient recruitment of SMADs to the activin receptor complex. Involved in receptor recycling via its association with the CART complex, a multiprotein complex required for efficient transferrin receptor recycling but not for EGFR degradation. In Homo sapiens (Human), this protein is Hepatocyte growth factor-regulated tyrosine kinase substrate (HGS).